We begin with the raw amino-acid sequence, 235 residues long: Eukaryotic translation initiation factor 4E-1 (235 aa).

Residues 1–36 form a disordered region; the sequence is MVVEETIKATSTEDLSNTIANQNPRGRGGDEDEELE. The span at 8–24 shows a compositional bias: polar residues; the sequence is KATSTEDLSNTIANQNP. EIF4G-binding stretches follow at residues 60-63 and 70-106; these read HPLE and FDNPSAKSKQATWGASIRPIYTFSTVEEFWSVYNNIH. MRNA contacts are provided by residues 78–83, Lys110, and 128–129; these read KQATWG and WE. Cys133 and Cys171 are disulfide-bonded. Positions 154–163 are EIF4G-binding; it reads YTLLAMIGEQ. Residues 178 to 183 and 223 to 227 contribute to the mRNA site; these read RSGQDK and KKFDR.

This sequence belongs to the eukaryotic initiation factor 4E family. As to quaternary structure, EIF4F is a multi-subunit complex, the composition of which varies with external and internal environmental conditions. It is composed of at least EIF4A, EIF4E and EIF4G. EIF4E is also known to interact with other partners. In higher plants two isoforms of EIF4F have been identified, named isoform EIF4F and isoform EIF(iso)4F. Isoform EIF4F has subunits p220 and p26, whereas isoform EIF(iso)4F has subunits p82 and p28. In terms of assembly, (Microbial infection) Interacts with potyvirus viral genome-linked protein (VPg); this interaction is possible in susceptible hosts but impaired in resistant plants. Post-translationally, according to the redox status, the Cys-133-Cys-171 disulfide bridge may have a role in regulating protein function by affecting its ability to bind capped mRNA.

Its subcellular location is the nucleus. The protein resides in the cytoplasm. In terms of biological role, component of the protein complex eIF4F, which is involved in the recognition of the mRNA cap, ATP-dependent unwinding of 5'-terminal secondary structure and recruitment of mRNA to the ribosome. Recognizes and binds the 7-methylguanosine-containing mRNA cap during an early step in the initiation of protein synthesis and facilitates ribosome binding by inducing the unwinding of the mRNAs secondary structures. Key component of recessive resistance to potyviruses. Functionally, (Microbial infection) Susceptibility host factor required for viral infection by recruiting viral RNAs to the host ribosomal complex via an interaction with viral genome-linked protein (VPg). This is Eukaryotic translation initiation factor 4E-1 from Citrullus lanatus (Watermelon).